We begin with the raw amino-acid sequence, 492 residues long: Amphoterin-induced protein 1 (492 aa).

The N-terminal stretch at 1-27 (MQPQRDLRGLWLLLLSVFLLLFEVARA) is a signal peptide. Positions 28–61 (GRSVVSCPANCLCASNILSCSKQQLPNVPQSLPS) constitute an LRRNT domain. The Extracellular segment spans residues 28-371 (GRSVVSCPAN…LHGHHDTLNT (344 aa)). Intrachain disulfides connect Cys-34–Cys-40 and Cys-38–Cys-47. 6 LRR repeats span residues 62-83 (YTALLDLSHNNLSRLRAEWTPT), 87-108 (NLHSLLLSHNHLNFISSEAFVP), 111-132 (NLRYLDLSSNHLHTLDEFLFSD), 135-156 (ALEVLLLYNNHIVVVDRNAFED), 159-180 (QLQKLYLSQNQISRFPVELIKD), and 186-206 (KLMLLDLSSNKLKKLPLTDLQ). N-linked (GlcNAc...) asparagine glycosylation is present at Asn-72. Positions 208 to 272 (LPAWVKNGLY…FSLDFFNCSE (65 aa)) constitute an LRRCT domain. 3 cysteine pairs are disulfide-bonded: Cys-225-Cys-253, Cys-227-Cys-270, and Cys-290-Cys-340. Residues Asn-269, Asn-315, Asn-348, and Asn-359 are each glycosylated (N-linked (GlcNAc...) asparagine). In terms of domain architecture, Ig-like C2-type spans 269 to 352 (NCSEYKESAW…MGETFNETLS (84 aa)). Residues 372 to 392 (AYTTLVGCILSVVLVLIYLYL) form a helical membrane-spanning segment. Residues 393-492 (TPCRCWCRGV…SVFSDTPIVV (100 aa)) are Cytoplasmic-facing. The disordered stretch occupies residues 404 to 492 (KPSSHQGDSL…SVFSDTPIVV (89 aa)). A compositionally biased stretch (polar residues) spans 407 to 423 (SHQGDSLSSSMLSTTPN). Residues 430–441 (GDKDDGFDRRVA) show a composition bias toward basic and acidic residues. 2 positions are modified to phosphoserine: Ser-476 and Ser-480.

This sequence belongs to the immunoglobulin superfamily. AMIGO family. In terms of assembly, homodimer, and heterodimer with AMIGO2 and AMIGO3. Interacts with KCNB1. Expressed in hippocampal and cortical neurons (at protein level). High levels in cerebellum, cerebrum, and retina. Low levels in liver, kidney, small intestine, spleen, lung and heart.

It localises to the cell membrane. The protein resides in the perikaryon. Its subcellular location is the cell projection. It is found in the dendrite. Promotes growth and fasciculation of neurites from cultured hippocampal neurons. May be involved in fasciculation as well as myelination of developing neural axons. May have a role in regeneration as well as neural plasticity in the adult nervous system. May mediate homophilic as well as heterophilic cell-cell interaction and contribute to signal transduction through its intracellular domain. Assembled with KCNB1 modulates the gating characteristics of the delayed rectifier voltage-dependent potassium channel KCNB1. The sequence is that of Amphoterin-induced protein 1 from Mus musculus (Mouse).